We begin with the raw amino-acid sequence, 1207 residues long: ATP-dependent helicase/nuclease subunit A (1207 aa).

The UvrD-like helicase ATP-binding domain maps to 2–472; that stretch reads PQFTKEQQQA…ILLSDNFRST (471 aa). 23-30 contacts ATP; sequence ASAGSGKT. Residues 492–783 enclose the UvrD-like helicase C-terminal domain; that stretch reads GGIDYSKEGQ…RLMTIHGSKG (292 aa).

This sequence belongs to the helicase family. AddA subfamily. In terms of assembly, heterodimer of AddA and AddB/RexB. Requires Mg(2+) as cofactor.

It catalyses the reaction Couples ATP hydrolysis with the unwinding of duplex DNA by translocating in the 3'-5' direction.. It carries out the reaction ATP + H2O = ADP + phosphate + H(+). In terms of biological role, the heterodimer acts as both an ATP-dependent DNA helicase and an ATP-dependent, dual-direction single-stranded exonuclease. Recognizes the chi site generating a DNA molecule suitable for the initiation of homologous recombination. The AddA nuclease domain is required for chi fragment generation; this subunit has the helicase and 3' -&gt; 5' nuclease activities. The sequence is that of ATP-dependent helicase/nuclease subunit A from Lactobacillus acidophilus (strain ATCC 700396 / NCK56 / N2 / NCFM).